The chain runs to 276 residues: NAD(+)--dinitrogen-reductase ADP-D-ribosyltransferase (276 aa).

In terms of assembly, monomer.

The catalysed reaction is L-arginyl-[dinitrogen reductase] + NAD(+) = N(omega)-alpha-(ADP-D-ribosyl)-L-arginyl-[dinitrogen reductase] + nicotinamide + H(+). Its function is as follows. Involved in the regulation of the nitrogen fixation activity by the reversible ADP-ribosylation of the dinitrogenase reductase component of the nitrogenase enzyme complex. The ADP-ribosyltransferase (DraT) transfers the ADP-ribose group from NAD to dinitrogenase reductase. The ADP-ribose group is removed through the action of the ADP-ribosylglycohydrolase (DraG). The chain is NAD(+)--dinitrogen-reductase ADP-D-ribosyltransferase (draT) from Rhodospirillum rubrum.